The following is a 167-amino-acid chain: Lipoprotein signal peptidase (167 aa).

The next 4 membrane-spanning stretches (helical) occupy residues 8–28 (TFLT…VVLL), 46–66 (WGHF…FGLF), 70–90 (KIPL…FLGI), and 101–121 (IALT…LFHG). Catalysis depends on residues aspartate 125 and aspartate 143. A helical transmembrane segment spans residues 139–159 (FNLADAFISLGTLLLVGHLYF).

This sequence belongs to the peptidase A8 family.

It localises to the cell inner membrane. The catalysed reaction is Release of signal peptides from bacterial membrane prolipoproteins. Hydrolyzes -Xaa-Yaa-Zaa-|-(S,diacylglyceryl)Cys-, in which Xaa is hydrophobic (preferably Leu), and Yaa (Ala or Ser) and Zaa (Gly or Ala) have small, neutral side chains.. The protein operates within protein modification; lipoprotein biosynthesis (signal peptide cleavage). Functionally, this protein specifically catalyzes the removal of signal peptides from prolipoproteins. The sequence is that of Lipoprotein signal peptidase from Chlamydia muridarum (strain MoPn / Nigg).